The primary structure comprises 91 residues: Large ribosomal subunit protein uL23 (91 aa).

This sequence belongs to the universal ribosomal protein uL23 family. Part of the 50S ribosomal subunit. Contacts protein L29.

In terms of biological role, binds to 23S rRNA. One of the proteins that surrounds the polypeptide exit tunnel on the outside of the ribosome. In Staphylothermus marinus (strain ATCC 43588 / DSM 3639 / JCM 9404 / F1), this protein is Large ribosomal subunit protein uL23.